The primary structure comprises 268 residues: Xyloglucan endotransglucosylase protein 7 (268 aa).

Residues 1 to 196 enclose the GH16 domain; it reads MNAEGGNLHR…WTKAPFTASY (196 aa). E82 acts as the Nucleophile in catalysis. Catalysis depends on E86, which acts as the Proton donor. E86 contributes to the xyloglucan binding site. N-linked (GlcNAc...) asparagine glycosylation occurs at N90. Residues 99–101, 109–111, 175–176, and G180 each bind xyloglucan; these read HTN, NRE, and DW. Disulfide bonds link C204/C213 and C251/C265. Position 256 (R256) interacts with xyloglucan.

This sequence belongs to the glycosyl hydrolase 16 family. XTH group 2 subfamily. Contains at least one intrachain disulfide bond essential for its enzymatic activity. As to expression, expressed at a very high level in flowers and stems (picked at anthesis), and at a lower level in ripe leaves and fruits.

It is found in the cytoplasm. It carries out the reaction breaks a beta-(1-&gt;4) bond in the backbone of a xyloglucan and transfers the xyloglucanyl segment on to O-4 of the non-reducing terminal glucose residue of an acceptor, which can be a xyloglucan or an oligosaccharide of xyloglucan.. In terms of biological role, catalyzes xyloglucan endotransglycosylation (XET). Cleaves and religates xyloglucan polymers. Does not catalyze xyloglucan endohydrolysis (XEH). Probably involved in cell wall assembly and synthesis in fast growing tissues and in the maintenance of firmness in mature fruits. The protein is Xyloglucan endotransglucosylase protein 7 of Diospyros kaki (Kaki persimmon).